Consider the following 337-residue polypeptide: MRVLGIETSCDETGIAVYDDEKGLLSHALYSQVKLHADYGGVVPELASRDHVRKIIPLIRQALKEANCTQDDIDAIAYTKGPGLVGALLVGACVGRSLAFAWGKPAVGVHHMEGHLLAPMLEEDVPEFPFLALLVSGGHSMMVAVEGIGRYQVLGESVDDAAGEAFDKTAKLMGLDYPGGPRLAKLAAQGEPNCYRFPRPMTDRPGLDFSFSGLKTFAANTIADEPDDEQTRANIARAFEEAVVDTLAIKCKRALKQTGYNRLVIAGGVSANSRLRESLAEMMQGLGGRVYYPRGEFCTDNGAMIAYAGMQRLKADQLEPLAVKGMPRWPLDSLPPV.

Fe cation-binding residues include His-111 and His-115. Residues 134 to 138 (LVSGG), Asp-167, Gly-180, and Asn-272 each bind substrate. Asp-300 contributes to the Fe cation binding site.

The protein belongs to the KAE1 / TsaD family. Fe(2+) is required as a cofactor.

Its subcellular location is the cytoplasm. The enzyme catalyses L-threonylcarbamoyladenylate + adenosine(37) in tRNA = N(6)-L-threonylcarbamoyladenosine(37) in tRNA + AMP + H(+). Required for the formation of a threonylcarbamoyl group on adenosine at position 37 (t(6)A37) in tRNAs that read codons beginning with adenine. Is involved in the transfer of the threonylcarbamoyl moiety of threonylcarbamoyl-AMP (TC-AMP) to the N6 group of A37, together with TsaE and TsaB. TsaD likely plays a direct catalytic role in this reaction. The chain is tRNA N6-adenosine threonylcarbamoyltransferase from Shewanella loihica (strain ATCC BAA-1088 / PV-4).